The following is an 86-amino-acid chain: RNA-binding protein Hfq (86 aa).

The 60-residue stretch at 9 to 68 (DPYLNTLRKEKVPVSIYLVNGIKLQGSIESFDQFVVLLKNTVSQMVYKHAISTVVPARPV) folds into the Sm domain. The interval 66 to 86 (RPVRLPSPSDSEHGDSEPGNA) is disordered. The span at 75–86 (DSEHGDSEPGNA) shows a compositional bias: basic and acidic residues.

The protein belongs to the Hfq family. As to quaternary structure, homohexamer.

Functionally, RNA chaperone that binds small regulatory RNA (sRNAs) and mRNAs to facilitate mRNA translational regulation in response to envelope stress, environmental stress and changes in metabolite concentrations. Also binds with high specificity to tRNAs. In Pseudomonas putida (strain W619), this protein is RNA-binding protein Hfq.